The chain runs to 138 residues: Large ribosomal subunit protein bL17 (138 aa).

A disordered region spans residues 118 to 138 (RDEDAKGKDSGPSQDGAAEAA).

This sequence belongs to the bacterial ribosomal protein bL17 family. As to quaternary structure, part of the 50S ribosomal subunit. Contacts protein L32.

The sequence is that of Large ribosomal subunit protein bL17 from Rhodopseudomonas palustris (strain HaA2).